Consider the following 595-residue polypeptide: D-xylonate dehydratase (595 aa).

Cysteine 64 contacts [2Fe-2S] cluster. Glutamate 96 contributes to the Mg(2+) binding site. Cysteine 132 contributes to the [2Fe-2S] cluster binding site. Aspartate 133 contributes to the Mg(2+) binding site. Residue cysteine 205 participates in [2Fe-2S] cluster binding. Position 467 (glutamate 467) interacts with Mg(2+).

It belongs to the IlvD/Edd family. Homotetramer. The cofactor is [2Fe-2S] cluster. Mg(2+) serves as cofactor.

It carries out the reaction D-xylonate = 2-dehydro-3-deoxy-D-arabinonate + H2O. The enzyme catalyses D-gluconate = 2-dehydro-3-deoxy-D-gluconate + H2O. The protein operates within carbohydrate metabolism; D-xylose degradation. Its function is as follows. Catalyzes the dehydration of D-xylonate to 2-dehydro-3-deoxy-D-arabinonate during D-xylose degradation. Can also dehydrate D-gluconate, with similar catalytic efficiency. Has weak activity with D-galactonate, D-fuconate and L-arabinonate. In Caulobacter vibrioides (strain ATCC 19089 / CIP 103742 / CB 15) (Caulobacter crescentus), this protein is D-xylonate dehydratase.